The primary structure comprises 84 residues: U4-theraphotoxin-Hhn1a (84 aa).

The N-terminal stretch at 1–22 (MKVTLIAILTCAAVLVLHTTAA) is a signal peptide. Residues 23–47 (EELEESQLMEVGMPDTELAAVDGER) constitute a propeptide that is removed on maturation. 3 cysteine pairs are disulfide-bonded: C51-C65, C55-C76, and C70-C81.

Belongs to the neurotoxin 12 (Hwtx-2) family. 02 (Hwtx-2) subfamily. Expressed by the venom gland.

The protein resides in the secreted. Its function is as follows. Postsynaptic neurotoxin. The sequence is that of U4-theraphotoxin-Hhn1a from Cyriopagopus hainanus (Chinese bird spider).